The primary structure comprises 291 residues: MTVDSKPQLQRLAADADVDRMCRLLEEDGAFILKGLLPFDVVESFNRELDVQMAIPPPKGERLLADKYPPHFKYVPNVATTCPTFRNTILINPVIHAICEAYFQRTGDYWLSAAFLREIESGMPAQPFHRDDATHPLMHYQPLEAPPISLSVIFPLTEFTEENGATEVILGSHRWTEVGTPERDQAVLATMDPGDVLIVRQRVVHAGGGNRTTAGKPRRVVLAYFNSVQLTPFETYRTMPREMVESMTVLGQRMLGWRTMKPSDPNIVGINLIDDKRLENVLQLKAADSPA.

Tyrosine 68 is a catalytic residue.

Belongs to the PhyH family. As to quaternary structure, homodimer. It depends on Fe cation as a cofactor.

It catalyses the reaction fumitremorgin B + 2-oxoglutarate + AH2 + 2 O2 = verruculogen + succinate + A + CO2 + H2O. Its pathway is mycotoxin biosynthesis. Verruculogen synthase; part of the gene cluster that mediates the biosynthesis of fumitremorgins, indole alkaloids that carry not only intriguing chemical structures, but also interesting biological and pharmacological activities. The biosynthesis of fumitremorgin-type alkaloids begins by condensation of the two amino acids L-tryptophan and L-proline to brevianamide F, catalyzed by the non-ribosomal peptide synthetase ftmA. Brevianamide F is then prenylated by the prenyltransferase ftmPT1/ftmB in the presence of dimethylallyl diphosphate, resulting in the formation of tryprostatin B. The three cytochrome P450 monooxygenases, ftmP450-1/ftmC, ftmP450-2/ftmE and ftmP450-3/FtmG, are responsible for the conversion of tryprostatin B to 6-hydroxytryprostatin B, tryprostatin A to fumitremorgin C and fumitremorgin C to 12,13-dihydroxyfumitremorgin C, respectively. The putative methyltransferase ftmMT/ftmD is expected for the conversion of 6-hydroxytryprostatin B to tryprostatin A. FtmPT2/FtmH catalyzes the prenylation of 12,13-dihydroxyfumitre-morgin C in the presence of dimethylallyl diphosphate, resulting in the formation of fumitremorgin B. Fumitremorgin B is further converted to verruculogen by ftmOx1/ftmF via the insertion of an endoperoxide bond between the two prenyl moieties. In some fungal species, verruculogen is further converted to fumitremorgin A, but the enzymes involved in this step have not been identified yet. The sequence is that of Verruculogen synthase from Aspergillus fumigatus (Neosartorya fumigata).